We begin with the raw amino-acid sequence, 465 residues long: MVKLVEVLQHPDEIVPILQMLHKTYRAKRSYKDPGLAFCYGMLQRVSRSFSVVIQQLPDELRHPICVFYLILRALDTVEDDMNLPNEVKIPLLRTFHEHLFDRSWKLKCGYGPYVDLMENYPLVTDVFLTLSPGAQEVIRDSTRRMGNGMADFIGKDEVHSVAEYDLYCHYVAGLVGSAVAKIFVDSGLEKENLVAEVDLANNMGQFLQKTNVIRDYLEDINEEPAPRMFWPREIWGKYAQELADFKDPANEKAAVQCLNHMVTDALRHCEIGLNVIPLLQNIGILRSCLIPEVMGLRTLTLCYNNPQVFRGVVKMRRGETAKLFMSIYDKRSFYQTYLRLANELEAKCKGEASGDPMVATTLKHVHGIQKSCKAALSSKELLAKSGSALTDDPAIRLLLLVGVVAYFAYAFNLGDVRGEHGVRALGSILDLSQKGLAVASVALLLLVLLARSRLPLLTSASSKQ.

2 residues coordinate NADP(+): Arg-48 and Arg-73. 3 residues coordinate Mg(2+): Asp-76, Glu-79, and Asp-80. Residues Arg-215, Lys-315, and Arg-317 each contribute to the NADP(+) site. 2 consecutive transmembrane segments (helical) span residues 395 to 415 and 429 to 449; these read AIRL…FNLG and ILDL…LLVL.

The protein belongs to the phytoene/squalene synthase family.

It is found in the membrane. The catalysed reaction is presqualene diphosphate + NADPH + H(+) = squalene + diphosphate + NADP(+). In terms of biological role, produces squalene when coexpressed with SSL-1 and bisfarnesyl ether and a very small amount of squalene when incubated alone in the presence of NADPH. The polypeptide is Botryococcus squalene synthase (SSL-2) (Botryococcus braunii (Green alga)).